We begin with the raw amino-acid sequence, 739 residues long: Eukaryotic translation initiation factor 3 subunit B (739 aa).

Positions 1-98 are sufficient for interaction with HCR1 and TIF32; sequence MSINEEDYLQ…LFIQFKSTES (98 aa). The tract at residues 1-224 is sufficient for interaction with PIC8; the sequence is MSINEEDYLQ…GIQSWGGANF (224 aa). The 88-residue stretch at 37-124 folds into the RRM domain; the sequence is NYIIVDGAPI…HRLLVNKLSD (88 aa). WD repeat units lie at residues 190-229, 231-293, 301-339, 343-385, 453-502, 537-579, and 592-630; these read PRKG…SIKR, FHQQ…RTFA, QKEM…QLLD, VKVD…QTAR, ELKD…KGGV, IENK…ETNK, and DKFS…YEFT.

The protein belongs to the eIF-3 subunit B family. As to quaternary structure, component of the eukaryotic translation initiation factor 3 (eIF-3) complex.

Its subcellular location is the cytoplasm. In terms of biological role, RNA-binding component of the eukaryotic translation initiation factor 3 (eIF-3) complex, which is involved in protein synthesis of a specialized repertoire of mRNAs and, together with other initiation factors, stimulates binding of mRNA and methionyl-tRNAi to the 40S ribosome. The eIF-3 complex specifically targets and initiates translation of a subset of mRNAs involved in cell proliferation. In Candida albicans (strain SC5314 / ATCC MYA-2876) (Yeast), this protein is Eukaryotic translation initiation factor 3 subunit B.